Consider the following 586-residue polypeptide: Merlin (586 aa).

Serine 9 bears the Phosphoserine mark. One can recognise an FERM domain in the interval 18–307; it reads FTVRIVTMDA…GNHDLFMRRR (290 aa). The segment at 325–354 is disordered; that stretch reads KARKQMERQRLAREKQMREEAERSRDEPER. Serine 514 carries the phosphoserine; by PAK modification. The tract at residues 557–586 is disordered; the sequence is LHSEHSDSGTSSKHNTIKKPQAQGRRPICI.

As to quaternary structure, interacts with NHERF1, HGS and AGAP2. Interacts with SGSM3. Interacts (via FERM domain) with MPP1. Interacts with LAYN and WWC1. Interacts with the CUL4A-RBX1-DDB1-VprBP/DCAF1 E3 ubiquitin-protein ligase complex. The unphosphorylated form interacts (via FERM domain) with VPRBP/DCAF1. Interacts (via FERM domain) with NOP53; the interaction is direct. Interacts with SCHIP1; the interaction is direct. Ubiquitinated by the CUL4A-RBX1-DDB1-DCAF1/VprBP E3 ubiquitin-protein ligase complex for ubiquitination and subsequent proteasome-dependent degradation. In terms of processing, phosphorylation of Ser-514 inhibits nuclear localization by disrupting the intramolecular association of the FERM domain with the C-terminal tail. The dephosphorylation of Ser-514 favors the interaction with NOP53.

It localises to the cell membrane. Its subcellular location is the cell projection. It is found in the cytoplasm. The protein localises to the cytoskeleton. The protein resides in the nucleus. In terms of biological role, probable regulator of the Hippo/SWH (Sav/Wts/Hpo) signaling pathway, a signaling pathway that plays a pivotal role in tumor suppression by restricting proliferation and promoting apoptosis. Along with WWC1 can synergistically induce the phosphorylation of LATS1 and LATS2 and can probably function in the regulation of the Hippo/SWH (Sav/Wts/Hpo) signaling pathway. May act as a membrane stabilizing protein. May inhibit PI3 kinase by binding to AGAP2 and impairing its stimulating activity. Suppresses cell proliferation and tumorigenesis by inhibiting the CUL4A-RBX1-DDB1-VprBP/DCAF1 E3 ubiquitin-protein ligase complex Plays a role in lens development and is required for complete fiber cell terminal differentiation, maintenance of cell polarity and separation of the lens vesicle from the corneal epithelium. This Rattus norvegicus (Rat) protein is Merlin (Nf2).